The sequence spans 209 residues: ATP-dependent Clp protease proteolytic subunit (209 aa).

S101 functions as the Nucleophile in the catalytic mechanism. H126 is a catalytic residue.

The protein belongs to the peptidase S14 family. As to quaternary structure, component of the chloroplastic Clp protease core complex.

The protein localises to the plastid. The protein resides in the chloroplast stroma. It carries out the reaction Hydrolysis of proteins to small peptides in the presence of ATP and magnesium. alpha-casein is the usual test substrate. In the absence of ATP, only oligopeptides shorter than five residues are hydrolyzed (such as succinyl-Leu-Tyr-|-NHMec, and Leu-Tyr-Leu-|-Tyr-Trp, in which cleavage of the -Tyr-|-Leu- and -Tyr-|-Trp bonds also occurs).. In terms of biological role, cleaves peptides in various proteins in a process that requires ATP hydrolysis. Has a chymotrypsin-like activity. Plays a major role in the degradation of misfolded proteins. This chain is ATP-dependent Clp protease proteolytic subunit, found in Huperzia lucidula (Shining clubmoss).